The following is a 157-amino-acid chain: Epithelial membrane protein 1 (157 aa).

The helical transmembrane segment at 1–21 threads the bilayer; sequence MLVLLAGIFVVHIATVIMLFV. N43 and N46 each carry an N-linked (GlcNAc...) asparagine glycan. 3 helical membrane-spanning segments follow: residues 67-87, 95-115, and 134-154; these read FMIL…FQLF, FFLS…GVSI, and YILG…YLVL.

The protein belongs to the PMP-22/EMP/MP20 family.

It is found in the membrane. The sequence is that of Epithelial membrane protein 1 (EMP1) from Homo sapiens (Human).